Here is a 245-residue protein sequence, read N- to C-terminus: Phycocyanobilin:ferredoxin oxidoreductase (245 aa).

This sequence belongs to the HY2 family.

The enzyme catalyses (2R,3Z)-phycocyanobilin + 4 oxidized [2Fe-2S]-[ferredoxin] = biliverdin IXalpha + 4 reduced [2Fe-2S]-[ferredoxin] + 4 H(+). Catalyzes the four-electron reduction of biliverdin IX-alpha (2-electron reduction at both the A and D rings); the reaction proceeds via an isolatable 2-electron intermediate, 181,182-dihydrobiliverdin. The sequence is that of Phycocyanobilin:ferredoxin oxidoreductase from Trichodesmium erythraeum (strain IMS101).